Here is an 88-residue protein sequence, read N- to C-terminus: MGTARFLRAVLLLSVLLMVTFPALLSAEHHDGRVDICRLPSDSGDCLRFFEMWYFDGTACTKFVYGGYGGNDNRFPTEKACMKRCAKA.

An N-terminal signal peptide occupies residues 1–27 (MGTARFLRAVLLLSVLLMVTFPALLSA). Positions 28–33 (EHHDGR) are excised as a propeptide. Residues 37-85 (CRLPSDSGDCLRFFEMWYFDGTACTKFVYGGYGGNDNRFPTEKACMKRC) form the BPTI/Kunitz inhibitor domain. Disulfide bonds link C37–C85 and C60–C81.

The protein belongs to the venom Kunitz-type family. 03 (sub-Kunitz) subfamily. Expressed by the venom gland.

Its subcellular location is the secreted. Its function is as follows. Serine protease inhibitor that inhibits trypsin at a molar ratio of 1:1. The polypeptide is Kunitz-type U15-theraphotoxin-Hhn1g (Cyriopagopus hainanus (Chinese bird spider)).